The sequence spans 416 residues: MFSAQDTLAKVDPELWTAIQAENRRQEDHIELIASENYVSHAVMEAQGSQLTNKYAEGYPGKRYYGGCEHVDVAEQIAIDRIKKLFGAEAANVQPNSGSQANQAVLMAFAKPGDTIMGMSLAEGGHLTHGMPLNMSGKWFNVVAYGLDEKEEIDYDAMERLAREHKPRIIIAGASAYSLRIDFERFAKIAKEIGAIFWVDMAHYAGLIAAGYYPNPVPHADVVTSTTHKTLRGPRGGIILMKAEHEKAINSAIFPGLQGGPLMHVIAAKAVAFKEALTPQFRDYQEQVIANARVMARVLGEERGLRIISGRTESHVFLVDLRSKNITGKAAEAVLGSAHITVNKNSIPKDPEKPFVTSGIRIGSPAMTTRGFTEIEAEQVAHLIADVLDAPQDEAVLANVQAKVAELCARHPVYGK.

(6S)-5,6,7,8-tetrahydrofolate is bound by residues Leu121 and 125–127 (GHL). The residue at position 229 (Lys229) is an N6-(pyridoxal phosphate)lysine.

Belongs to the SHMT family. As to quaternary structure, homodimer. The cofactor is pyridoxal 5'-phosphate.

The protein resides in the cytoplasm. The catalysed reaction is (6R)-5,10-methylene-5,6,7,8-tetrahydrofolate + glycine + H2O = (6S)-5,6,7,8-tetrahydrofolate + L-serine. It functions in the pathway one-carbon metabolism; tetrahydrofolate interconversion. The protein operates within amino-acid biosynthesis; glycine biosynthesis; glycine from L-serine: step 1/1. Catalyzes the reversible interconversion of serine and glycine with tetrahydrofolate (THF) serving as the one-carbon carrier. This reaction serves as the major source of one-carbon groups required for the biosynthesis of purines, thymidylate, methionine, and other important biomolecules. Also exhibits THF-independent aldolase activity toward beta-hydroxyamino acids, producing glycine and aldehydes, via a retro-aldol mechanism. The chain is Serine hydroxymethyltransferase from Aromatoleum aromaticum (strain DSM 19018 / LMG 30748 / EbN1) (Azoarcus sp. (strain EbN1)).